The following is a 303-amino-acid chain: ADP-ribosyl cyclase/cyclic ADP-ribose hydrolase 1 (303 aa).

The Cytoplasmic segment spans residues 1-21 (MANYEFSQVSEDRPGCRLTRK). The chain crosses the membrane as a helical; Signal-anchor for type II membrane protein span at residues 22–44 (AQIGLGVGLLLLVALVVVVVIVL). Residues 45–303 (WPRSPLVWKG…PEHPSCRLNV (259 aa)) are Extracellular-facing. 3 cysteine pairs are disulfide-bonded: cysteine 69–cysteine 85, cysteine 102–cysteine 183, and cysteine 163–cysteine 176. Asparagine 103 is a glycosylation site (N-linked (GlcNAc...) asparagine). Residue cysteine 122 is part of the active site. The N-linked (GlcNAc...) asparagine glycan is linked to asparagine 123. The active site involves cysteine 204. N-linked (GlcNAc...) asparagine glycans are attached at residues asparagine 212 and asparagine 222. 2 disulfides stabilise this stretch: cysteine 257–cysteine 278 and cysteine 290–cysteine 299.

This sequence belongs to the ADP-ribosyl cyclase family. In terms of assembly, homodimer. As to expression, spleen, liver, heart, thymus, thyroid gland, ileum, colon, cerebellum, salivary gland, adrenal gland, jejunum, islets of Langerhans and osteoclasts.

The protein resides in the cell membrane. It catalyses the reaction NAD(+) = cyclic ADP-beta-D-ribose + nicotinamide + H(+). The enzyme catalyses nicotinate + NADP(+) = nicotinate-adenine dinucleotide phosphate + nicotinamide. It carries out the reaction NAD(+) + H2O = ADP-D-ribose + nicotinamide + H(+). Both NAADP and cADPR synthesis are inhibited by nicotinic acid. Its function is as follows. Synthesizes the second messengers cyclic ADP-ribose and nicotinate-adenine dinucleotide phosphate, the former a second messenger for glucose-induced insulin secretion, the latter a Ca(2+) mobilizer. Also has cADPR hydrolase activity. Regulates osteoclastic bone resorption, probably via production of cyclic ADP-ribose and triggering of a cytosolic calcium ion signal through ryanodine receptor activation. The protein is ADP-ribosyl cyclase/cyclic ADP-ribose hydrolase 1 (Cd38) of Rattus norvegicus (Rat).